Consider the following 78-residue polypeptide: Conotoxin Cl11.1 (78 aa).

Residues Met1–Gly19 form the signal peptide. A propeptide spanning residues Gly20 to Ala33 is cleaved from the precursor. Disulfide bonds link Cys47–Cys61, Cys54–Cys66, Cys60–Cys70, and Cys65–Cys77.

This sequence belongs to the conotoxin I1 superfamily. Expressed by the venom duct.

The protein localises to the secreted. This chain is Conotoxin Cl11.1, found in Californiconus californicus (California cone).